The sequence spans 304 residues: ADP-polyphosphate phosphotransferase (304 aa).

This sequence belongs to the polyphosphate kinase 2 (PPK2) family. Class I subfamily.

The catalysed reaction is [phosphate](n) + ATP = [phosphate](n+1) + ADP. In terms of biological role, uses inorganic polyphosphate (polyP) as a donor to convert ADP to ATP. This is ADP-polyphosphate phosphotransferase from Pseudomonas aeruginosa (strain ATCC 15692 / DSM 22644 / CIP 104116 / JCM 14847 / LMG 12228 / 1C / PRS 101 / PAO1).